Reading from the N-terminus, the 198-residue chain is Recombination protein RecR (198 aa).

The segment at 57–72 adopts a C4-type zinc-finger fold; that stretch reads CSVCGHITDKDPCYIC. Positions 80 to 175 constitute a Toprim domain; sequence SVICVVQESK…KVTRIAHGLP (96 aa).

It belongs to the RecR family.

In terms of biological role, may play a role in DNA repair. It seems to be involved in an RecBC-independent recombinational process of DNA repair. It may act with RecF and RecO. This Listeria monocytogenes serotype 4b (strain CLIP80459) protein is Recombination protein RecR.